Consider the following 221-residue polypeptide: Large ribosomal subunit protein uL4 (221 aa).

The disordered stretch occupies residues H56–G83.

It belongs to the universal ribosomal protein uL4 family. In terms of assembly, part of the 50S ribosomal subunit.

In terms of biological role, one of the primary rRNA binding proteins, this protein initially binds near the 5'-end of the 23S rRNA. It is important during the early stages of 50S assembly. It makes multiple contacts with different domains of the 23S rRNA in the assembled 50S subunit and ribosome. Functionally, forms part of the polypeptide exit tunnel. The polypeptide is Large ribosomal subunit protein uL4 (Bifidobacterium adolescentis (strain ATCC 15703 / DSM 20083 / NCTC 11814 / E194a)).